The sequence spans 560 residues: MKVWMAILISILCWQSSAWAVCPAWSPARAQEEISRLQQQIKQWDDDYWKEGKSEVEDGVYDQLSARLTQWQRCFGNETRDVMMPPLNGAVMHPVAHTGVRKMADKNALSLWMRERSDLWVQPKVDGVAVTLVYRDGKLNKAISRGNGLKGEDWTQKVRLISAVPQTVSGPLANSTLQGEIFLKRKGHIQQQMGGINARAKVAGLMMRQGNSDTLNSLAVFVWAWPDGPHLMTDRLKDLATAGFTLTQTYTRAVKNADEVAHVRNEWWKAKLPFVTDGVVVRAAKEPESRHWLPGQAEWLVAWKYQPVAQVAEVKAIQFAVGKSGKISVVASLAPVMLDDKKIQRVNIGSVRRWQEWDIAPGDQILVSLAGQGIPRIDDVVWRGAERTKPTPPENRFNSLTCYFASDVCQEQFISRLVWLGSKQVLGLDGIGEAGWRALHQTHRFEHIFSWLLLTPEQLQNTPGIAKSKSAQLWHQFNLARQQPFTRWVMAMGIPLTRAALNASDERSWSQLLFSTEQFWQQLPGTGSGRARQVIEWKENAQIKKLGSWLSAQQITGFEP.

Lysine 124 serves as the catalytic N6-AMP-lysine intermediate.

The protein belongs to the NAD-dependent DNA ligase family. LigB subfamily.

It catalyses the reaction NAD(+) + (deoxyribonucleotide)n-3'-hydroxyl + 5'-phospho-(deoxyribonucleotide)m = (deoxyribonucleotide)n+m + AMP + beta-nicotinamide D-nucleotide.. Catalyzes the formation of phosphodiester linkages between 5'-phosphoryl and 3'-hydroxyl groups in double-stranded DNA using NAD as a coenzyme and as the energy source for the reaction. The polypeptide is DNA ligase B (Escherichia coli O6:H1 (strain CFT073 / ATCC 700928 / UPEC)).